Reading from the N-terminus, the 392-residue chain is Gastricsin (392 aa).

The N-terminal stretch at 1–16 (MKWMVVALLCLPLLEA) is a signal peptide. The propeptide at 17 to 62 (SLLRVPLRKMKSIRETMKEQGVLKDFLKTHKYDPGQKYHFGNFGDY) is activation peptide. The Peptidase A1 domain maps to 76–389 (YFGEISIGTP…DMGNNKVGLA (314 aa)). Residue Asp-94 is part of the active site. Disulfide bonds link Cys-107/Cys-112 and Cys-270/Cys-275. Residue Asp-280 is part of the active site. A disulfide bridge connects residues Cys-314 and Cys-347.

The protein belongs to the peptidase A1 family.

The protein resides in the secreted. The enzyme catalyses More restricted specificity than pepsin A, but shows preferential cleavage at Tyr-|-Xaa bonds. High activity on hemoglobin.. Functionally, hydrolyzes a variety of proteins. The polypeptide is Gastricsin (Pgc) (Rattus norvegicus (Rat)).